The following is a 303-amino-acid chain: uncharacterized protein (303 aa).

This is an uncharacterized protein from Bacillus subtilis (strain 168).